A 326-amino-acid polypeptide reads, in one-letter code: tRNA-modifying protein YgfZ (326 aa).

Residues Trp27 and Trp189 each contribute to the folate site.

This sequence belongs to the tRNA-modifying YgfZ family.

The protein resides in the cytoplasm. Folate-binding protein involved in regulating the level of ATP-DnaA and in the modification of some tRNAs. It is probably a key factor in regulatory networks that act via tRNA modification, such as initiation of chromosomal replication. The protein is tRNA-modifying protein YgfZ of Salmonella paratyphi A (strain AKU_12601).